A 792-amino-acid polypeptide reads, in one-letter code: Oxidoreductase cns1 (792 aa).

In terms of assembly, interacts with cns2.

It localises to the lipid droplet. Its pathway is secondary metabolite biosynthesis. Functionally, oxidoreductase; part of the gene cluster that mediates the biosynthesis of cordycepin (COR) and pentostatin (PTN), two adenosine analogs with related bioactivity profiles as both mimic adenosine and can inhibit some of the processes that are adenosine dependent. Within the pathway, cns1 catalyzes the last step by converting the cns2 product 2'-carbonyl-3'-deoxyadenosine (2'-C-3'-dA) into cordycepin (3'-deoxyadenosine). The first step of cordycepin biosynthesis involves hydroxyl phosphorylation of the 3'-OH position on adenosine to produce adenosine-3'-monophosphate (3'-AMP), catalyzed by kinase activity of cns3. Next, 3'-AMP is dephosphorylated to 2'-carbonyl-3'-deoxyadenosine by cns2, which is finally converted to cordycepin by the oxidoreductase cns1. Pentostatin production is mediated by the ATP phosphoribosyltransferase activity of cns3 on adenosine to inhibit the activity of adenosine deaminase (ADA) to prevent COR deamination to 3'-deoxyinosine (3'-dI). The polypeptide is Oxidoreductase cns1 (Cordyceps militaris (strain CM01) (Caterpillar fungus)).